We begin with the raw amino-acid sequence, 460 residues long: Orexin receptor type 2 (460 aa).

At 1–54 the chain is on the extracellular side; the sequence is MSSTKLEDSLPRRNWSSASELNETQEPFLNPTDYDDEEFLRYLWREYLHPKEYE. N-linked (GlcNAc...) asparagine glycosylation is found at asparagine 14 and asparagine 22. Residues 33–49 form a required for response to orexin-A region; sequence DYDDEEFLRYLWREYLH. The helical transmembrane segment at 55–75 threads the bilayer; the sequence is WVLIAGYIIVFVVALIGNVLV. Topologically, residues 76–88 are cytoplasmic; sequence CVAVWKNHHMRTV. Residues 89–110 traverse the membrane as a helical segment; the sequence is TNYFIVNLSLADVLVTITCLPA. Topologically, residues 111 to 127 are extracellular; it reads TLVVDITETWFFGQSLC. Residues cysteine 127 and cysteine 210 are joined by a disulfide bond. The helical transmembrane segment at 128–150 threads the bilayer; sequence KVIPYLQTVSVSVSVLTLSCIAL. Residues 151-170 are Cytoplasmic-facing; it reads DRWYAICHPLMFKSTAKRAR. Residues 171-191 form a helical membrane-spanning segment; that stretch reads NSIVVIWIVSCIIMIPQAIVM. Over 192 to 222 the chain is Extracellular; it reads ERSSMLPGLANKTTLFTVCDERWGGEVYPKM. N-linked (GlcNAc...) asparagine glycosylation is present at asparagine 202. The chain crosses the membrane as a helical span at residues 223 to 243; sequence YHICFFLVTYMAPLCLMVLAY. Residues 244 to 304 lie on the Cytoplasmic side of the membrane; that stretch reads LQIFRKLWCR…QIRARRKTAR (61 aa). Residues 305 to 326 traverse the membrane as a helical segment; sequence MLMVVLLVFAICYLPISILNVL. The Extracellular portion of the chain corresponds to 327–342; that stretch reads KRVFGMFTHTEDRETV. The helical transmembrane segment at 343–366 threads the bilayer; the sequence is YAWFTFSHWLVYANSAANPIIYNF. The Cytoplasmic segment spans residues 367 to 460; sequence LSGKFREEFK…SSLLSTWLEV (94 aa).

The protein belongs to the G-protein coupled receptor 1 family. In terms of tissue distribution, expressed in the brain in the cerebral cortex, septal nuclei, hippocampus, medial thalamic groups, dorsal and median raphe nuclei, and many hypothalamic nuclei including the tuberomammillary nucleus, dorsomedial hypothalamus, paraventricular hypothalamic nucleus, and ventral premammillary nucleus. Not detected in the spleen, lung, liver, skeletal muscle, kidney and testis. Orexin receptor mRNA expression has also been reported in the adrenal gland, enteric nervous system, and pancreas.

It localises to the cell membrane. Nonselective, high-affinity receptor for both orexin-A and orexin-B neuropeptides. Triggers an increase in cytoplasmic Ca(2+) levels in response to orexin-A binding. This chain is Orexin receptor type 2 (Hcrtr2), found in Rattus norvegicus (Rat).